A 487-amino-acid polypeptide reads, in one-letter code: Glutamate--tRNA ligase (487 aa).

Residues 11-21 carry the 'HIGH' region motif; sequence PSPTGYPHLGN. 4 residues coordinate Zn(2+): cysteine 108, cysteine 110, cysteine 135, and aspartate 137. Positions 245 to 249 match the 'KMSKS' region motif; that stretch reads KLSKR. Lysine 248 serves as a coordination point for ATP.

Belongs to the class-I aminoacyl-tRNA synthetase family. Glutamate--tRNA ligase type 1 subfamily. Monomer. Requires Zn(2+) as cofactor.

The protein localises to the cytoplasm. The enzyme catalyses tRNA(Glu) + L-glutamate + ATP = L-glutamyl-tRNA(Glu) + AMP + diphosphate. Functionally, catalyzes the attachment of glutamate to tRNA(Glu) in a two-step reaction: glutamate is first activated by ATP to form Glu-AMP and then transferred to the acceptor end of tRNA(Glu). The chain is Glutamate--tRNA ligase from Dehalococcoides mccartyi (strain CBDB1).